The sequence spans 417 residues: NADH-quinone oxidoreductase subunit D (417 aa).

Belongs to the complex I 49 kDa subunit family. In terms of assembly, NDH-1 is composed of 14 different subunits. Subunits NuoB, C, D, E, F, and G constitute the peripheral sector of the complex.

It localises to the cell inner membrane. The catalysed reaction is a quinone + NADH + 5 H(+)(in) = a quinol + NAD(+) + 4 H(+)(out). In terms of biological role, NDH-1 shuttles electrons from NADH, via FMN and iron-sulfur (Fe-S) centers, to quinones in the respiratory chain. The immediate electron acceptor for the enzyme in this species is believed to be ubiquinone. Couples the redox reaction to proton translocation (for every two electrons transferred, four hydrogen ions are translocated across the cytoplasmic membrane), and thus conserves the redox energy in a proton gradient. This chain is NADH-quinone oxidoreductase subunit D, found in Nitrosomonas europaea (strain ATCC 19718 / CIP 103999 / KCTC 2705 / NBRC 14298).